Here is a 146-residue protein sequence, read N- to C-terminus: Protein MGF 100-3L (146 aa).

The protein belongs to the asfivirus MGF 100 family.

Plays a role in virus cell tropism, and may be required for efficient virus replication in macrophages. The polypeptide is Protein MGF 100-3L (Ornithodoros (relapsing fever ticks)).